The sequence spans 190 residues: Probable thymidylate kinase (190 aa).

Residue 9–16 (GIDGAGKT) participates in ATP binding.

Belongs to the thymidylate kinase family.

The enzyme catalyses dTMP + ATP = dTDP + ADP. The protein is Probable thymidylate kinase (tmk1) of Sulfurisphaera tokodaii (strain DSM 16993 / JCM 10545 / NBRC 100140 / 7) (Sulfolobus tokodaii).